Here is a 506-residue protein sequence, read N- to C-terminus: Tetratricopeptide repeat protein 8 (506 aa).

Residues 83–112 are disordered; sequence RPGTSFARPKTSAKGVNPILRPTTNAGRPL. TPR repeat units lie at residues 217–250, 251–283, 284–317, 319–351, 353–385, 388–421, 423–455, and 456–489; these read YYWK…KKLI, ETFA…FPEN, VTML…ESNN, EAIA…GVSS, ELFL…MTDD, ADVW…DPDH, ESLV…NPYM, and FEGN…FPEH.

As to quaternary structure, part of BBSome complex, that contains at least bbs-1, bbs-2, bbs-4, bbs-5, osm-12, bbs-8/ttc-8 and bbs-9. In terms of tissue distribution, expressed in head and tail neurons. Expressed in ciliated male tail-neurons. Expressed in thermosensory and CO(2) sensory AFD neurons.

The protein resides in the cell projection. It is found in the cilium. It localises to the cytoplasm. The protein localises to the cytoskeleton. Its subcellular location is the cilium basal body. The protein resides in the cilium axoneme. Functionally, component of the BBSome complex. The BBSome complex is thought to function as a coat complex required for sorting of specific membrane proteins to the primary cilia. The BBSome complex is required for ciliogenesis but is dispensable for centriolar satellite function. Required for proper BBSome complex assembly and its ciliary localization. Required for cilia biogenesis and both the assembly and movement of intraflagellar transport proteins along the ciliary axoneme. Plays a role in guanylyl cyclase localization in the ring-like structures at the base of the finger compartment in AFD sensory neurons. In Caenorhabditis elegans, this protein is Tetratricopeptide repeat protein 8.